The chain runs to 103 residues: Ghrelin (103 aa).

An N-terminal signal peptide occupies residues 1-26 (MPLRRRASHMFVLLCALSLCVESVKG). The segment at 27–51 (GTSFLSPAQKPQGRRPPRMGRRDVA) is disordered. A lipid anchor (O-decanoyl serine; alternate) is attached at serine 29. Serine 29 carries the O-hexanoyl serine; alternate lipid modification. Serine 29 carries O-octanoyl serine; alternate lipidation. Glutamine 38 is subject to Glutamine amide. Residue methionine 45 is modified to Methionine amide. Positions 49–103 (DVAEPEIPVIKEDDQFMMSAPFELSVSLSEAEYEKYGPVLQKVLVNLLGDSPLEF) are cleaved as a propeptide — removed in mature form.

The protein belongs to the motilin family. O-octanoylated by GOAT/MBOAT4. O-octanoylation or O-decanoylation is essential for activity. The O-decanoylated form differs in the length of the carbon backbone of the carboxylic acid forming an ester bond with Ser-29. In terms of tissue distribution, expressed in the telencephalon, hypothalamus, pituitary, intestine, liver, spleen and gill, with expression strongest in the intestine.

It is found in the secreted. In terms of biological role, ligand for growth hormone secretagogue receptor type 1 (GHSR). Induces the release of growth hormone from the pituitary. Induces adiposity and stimulates gastric acid secretion. Involved in growth regulation. Has an appetite-stimulating effect. In Carassius auratus (Goldfish), this protein is Ghrelin (ghrl).